The chain runs to 340 residues: Gigasin-2 (340 aa).

A signal peptide spans 1–21 (MNKMSPLYVLALCCLATTVFA). 2 EGF-like domains span residues 22–57 (KYDC…EDCG) and 65–97 (TAAN…DMCE). Cystine bridges form between C25–C39, C33–C45, C47–C56, C69–C79, C73–C85, and C87–C96.

Component of the organic matrix of calcified shell layers.

In Magallana gigas (Pacific oyster), this protein is Gigasin-2.